The chain runs to 214 residues: Thymidylate kinase (214 aa).

ATP is bound at residue 13-20 (GPDACGKS).

The protein belongs to the thymidylate kinase family.

The catalysed reaction is dTMP + ATP = dTDP + ADP. In terms of biological role, phosphorylation of dTMP to form dTDP in both de novo and salvage pathways of dTTP synthesis. This Malacoplasma penetrans (strain HF-2) (Mycoplasma penetrans) protein is Thymidylate kinase.